A 475-amino-acid chain; its full sequence is Ribulose bisphosphate carboxylase large chain (475 aa).

Positions 1 to 2 are excised as a propeptide; sequence MS. Pro-3 is modified (N-acetylproline). An N6,N6,N6-trimethyllysine modification is found at Lys-14. Substrate contacts are provided by Asn-123 and Thr-173. Lys-175 acts as the Proton acceptor in catalysis. Position 177 (Lys-177) interacts with substrate. Mg(2+) is bound by residues Lys-201, Asp-203, and Glu-204. Lys-201 is modified (N6-carboxylysine). The Proton acceptor role is filled by His-294. Positions 295, 327, and 379 each coordinate substrate.

The protein belongs to the RuBisCO large chain family. Type I subfamily. In terms of assembly, heterohexadecamer of 8 large chains and 8 small chains; disulfide-linked. The disulfide link is formed within the large subunit homodimers. Mg(2+) is required as a cofactor. Post-translationally, the disulfide bond which can form in the large chain dimeric partners within the hexadecamer appears to be associated with oxidative stress and protein turnover.

The protein resides in the plastid. It localises to the chloroplast. It carries out the reaction 2 (2R)-3-phosphoglycerate + 2 H(+) = D-ribulose 1,5-bisphosphate + CO2 + H2O. The enzyme catalyses D-ribulose 1,5-bisphosphate + O2 = 2-phosphoglycolate + (2R)-3-phosphoglycerate + 2 H(+). In terms of biological role, ruBisCO catalyzes two reactions: the carboxylation of D-ribulose 1,5-bisphosphate, the primary event in carbon dioxide fixation, as well as the oxidative fragmentation of the pentose substrate in the photorespiration process. Both reactions occur simultaneously and in competition at the same active site. In Staurastrum punctulatum (Green alga), this protein is Ribulose bisphosphate carboxylase large chain.